The following is a 152-amino-acid chain: Transcriptional regulator MraZ (152 aa).

SpoVT-AbrB domains lie at 5 to 52 (ATLV…PLPE) and 81 to 124 (ASEC…DETT).

The protein belongs to the MraZ family. Forms oligomers.

The protein localises to the cytoplasm. It is found in the nucleoid. Functionally, negatively regulates its own expression and that of the subsequent genes in the proximal part of the division and cell wall (dcw) gene cluster. Acts by binding directly to DNA. May also regulate the expression of genes outside the dcw cluster. The sequence is that of Transcriptional regulator MraZ from Escherichia coli O45:K1 (strain S88 / ExPEC).